A 461-amino-acid polypeptide reads, in one-letter code: O-methyltransferase CTB2 (461 aa).

An S-adenosyl-L-methionine-binding site is contributed by aspartate 288. The active-site Proton acceptor is the histidine 339.

The protein belongs to the class I-like SAM-binding methyltransferase superfamily. Cation-independent O-methyltransferase family. COMT subfamily.

It participates in mycotoxin biosynthesis. O-methyltransferase; part of the gene cluster that mediates the biosynthesis of cercosporin, a light-activated, non-host-selective toxin. The perylenequinone chromophore of cercosporin absorbs light energy to attain an electronically-activated triplet state and produces active oxygen species such as the hydroxyl radical, superoxide, hydrogen peroxide or singlet oxygen upon reaction with oxygen molecules. These reactive oxygen species cause damage to various cellular components including lipids, proteins and nucleic acids. The first step of cercosporin biosynthesis is performed by the polyketide synthase CTB1 which catalyzes the formation of nor-toralactone. The starter unit acyltransferase (SAT) domain of CTB1 initiates polyketide extension by the selective utilization of acetyl-CoA, which is elongated to the heptaketide in the beta-ketoacyl synthase (KS) domain by successive condensations with six malonyl units introduced by the malonyl acyltransferase (MAT) domain. The product template (PT) domain catalyzes C4-C9 and C2-C11 aldol cyclizations and dehydrations to a trihydroxynaphthalene, which is thought to be delivered to the thioesterase (TE) domain for product release. The bifunctional enzyme CTB3 then methylates nor-toralactone to toralactone before conducting an unusual oxidative aromatic ring opening. The O-methyltransferase CTB2 further methylates the nascent OH-6 of the CBT3 product, blocking further oxidation at this site before the reductase CTB6 reduces the 2-oxopropyl ketone at position C7, giving naphthalene. The FAD-dependent monooxygenase CTB5 in concert with the multicopper oxidase CTB12 are responsible for homodimerization of naphthalene with CTB7 installing the dioxepine moiety, finally producing cercosporin. The fasciclin domain-containing protein CTB11 might act with CTB5 and CTB12 whereas the roles of CTB9 and CTB10 have still to be elucidated. The protein is O-methyltransferase CTB2 of Cercospora nicotianae (Barn spot disease fungus).